The following is a 272-amino-acid chain: NADPH-dependent 7-cyano-7-deazaguanine reductase (272 aa).

80–82 provides a ligand contact to substrate; it reads VES. 82 to 83 lines the NADPH pocket; the sequence is SK. Cysteine 178 acts as the Thioimide intermediate in catalysis. Residue aspartate 185 is the Proton donor of the active site. A substrate-binding site is contributed by 217-218; sequence AE. 246–247 is a binding site for NADPH; that stretch reads RG.

The protein belongs to the GTP cyclohydrolase I family. QueF type 2 subfamily. As to quaternary structure, homodimer.

Its subcellular location is the cytoplasm. The enzyme catalyses 7-aminomethyl-7-carbaguanine + 2 NADP(+) = 7-cyano-7-deazaguanine + 2 NADPH + 3 H(+). The protein operates within tRNA modification; tRNA-queuosine biosynthesis. In terms of biological role, catalyzes the NADPH-dependent reduction of 7-cyano-7-deazaguanine (preQ0) to 7-aminomethyl-7-deazaguanine (preQ1). The chain is NADPH-dependent 7-cyano-7-deazaguanine reductase from Rickettsia typhi (strain ATCC VR-144 / Wilmington).